Consider the following 200-residue polypeptide: High mobility group protein 1 homolog (200 aa).

2 DNA-binding regions (HMG box) span residues 11-81 and 100-168; these read PRGR…QSYK and PKRN…AEYK. The span at 64–86 shows a compositional bias: basic and acidic residues; the sequence is EKSMRDKVRYDREMQSYKPPKGE. Disordered regions lie at residues 64–103 and 169–200; these read EKSM…PKRN and AKAK…DDSD. The segment covering 190-200 has biased composition (acidic residues); it reads SSDDSSSDDSD.

Belongs to the HMGB family.

Its subcellular location is the nucleus. The protein localises to the chromosome. Binds preferentially single-stranded DNA and unwinds double-stranded DNA. The polypeptide is High mobility group protein 1 homolog (HMG1) (Strongylocentrotus purpuratus (Purple sea urchin)).